Reading from the N-terminus, the 273-residue chain is Small ribosomal subunit protein eS1 (273 aa).

It belongs to the eukaryotic ribosomal protein eS1 family. As to quaternary structure, component of the small ribosomal subunit. Mature ribosomes consist of a small (40S) and a large (60S) subunit. The 40S subunit contains about 33 different proteins and 1 molecule of RNA (18S). The 60S subunit contains about 49 different proteins and 3 molecules of RNA (25S, 5.8S and 5S).

The protein localises to the cytoplasm. This chain is Small ribosomal subunit protein eS1 (rps3a), found in Dictyostelium discoideum (Social amoeba).